The chain runs to 82 residues: Conotoxin C11GB (82 aa).

Residues methionine 1–alanine 22 form the signal peptide. Residues glutamate 23–aspartate 53 constitute a propeptide that is removed on maturation. 3 disulfide bridges follow: cysteine 55-cysteine 72, cysteine 62-cysteine 76, and cysteine 71-cysteine 80.

The protein belongs to the conotoxin O1 superfamily. As to expression, expressed by the venom duct.

Its subcellular location is the secreted. This Conus vexillum (Flag cone) protein is Conotoxin C11GB.